A 547-amino-acid chain; its full sequence is ATP synthase subunit alpha (547 aa).

G172–T179 is a binding site for ATP.

It belongs to the ATPase alpha/beta chains family. As to quaternary structure, F-type ATPases have 2 components, CF(1) - the catalytic core - and CF(0) - the membrane proton channel. CF(1) has five subunits: alpha(3), beta(3), gamma(1), delta(1), epsilon(1). CF(0) has three main subunits: a(1), b(2) and c(9-12). The alpha and beta chains form an alternating ring which encloses part of the gamma chain. CF(1) is attached to CF(0) by a central stalk formed by the gamma and epsilon chains, while a peripheral stalk is formed by the delta and b chains.

It localises to the cell membrane. The catalysed reaction is ATP + H2O + 4 H(+)(in) = ADP + phosphate + 5 H(+)(out). Produces ATP from ADP in the presence of a proton gradient across the membrane. The alpha chain is a regulatory subunit. In Corynebacterium glutamicum (strain R), this protein is ATP synthase subunit alpha.